The chain runs to 166 residues: UPF0179 protein Tneu_1978 (166 aa).

The disordered stretch occupies residues 140 to 166; it reads PPSPSKSGGATASRDPSRAPPSRPLSK. Pro residues predominate over residues 157-166; that stretch reads RAPPSRPLSK.

This sequence belongs to the UPF0179 family.

In Pyrobaculum neutrophilum (strain DSM 2338 / JCM 9278 / NBRC 100436 / V24Sta) (Thermoproteus neutrophilus), this protein is UPF0179 protein Tneu_1978.